Reading from the N-terminus, the 95-residue chain is Co-chaperonin GroES (95 aa).

Belongs to the GroES chaperonin family. In terms of assembly, heptamer of 7 subunits arranged in a ring. Interacts with the chaperonin GroEL.

It localises to the cytoplasm. Together with the chaperonin GroEL, plays an essential role in assisting protein folding. The GroEL-GroES system forms a nano-cage that allows encapsulation of the non-native substrate proteins and provides a physical environment optimized to promote and accelerate protein folding. GroES binds to the apical surface of the GroEL ring, thereby capping the opening of the GroEL channel. The chain is Co-chaperonin GroES from Syntrophotalea carbinolica (strain DSM 2380 / NBRC 103641 / GraBd1) (Pelobacter carbinolicus).